We begin with the raw amino-acid sequence, 288 residues long: T-cell-interacting, activating receptor on myeloid cells protein 1 (288 aa).

The signal sequence occupies residues 1 to 16; it reads MISRLLSLLCLRLCVG. Residues 17–258 lie on the Extracellular side of the membrane; the sequence is QTDIPENGSP…EGYTVDNLIR (242 aa). 2 consecutive Ig-like C2-type domains span residues 27-113 and 124-217; these read PKPS…HPSN and PQPS…LEIS. 2 disulfides stabilise this stretch: Cys49–Cys97 and Cys146–Cys196. N-linked (GlcNAc...) asparagine glycosylation is found at Asn74 and Asn185. Residues 259–279 form a helical membrane-spanning segment; it reads VGVAAAILLIVGGFLVEAWHS. Residues 280-288 lie on the Cytoplasmic side of the membrane; the sequence is ERLSPNKPW.

In terms of assembly, interacts with Fc receptor gamma chain FCER1G. Post-translationally, N-glycosylated. In terms of tissue distribution, expressed in lung, uterus, lymph nodes, spleen, thymus and bone marrow. Expressed in bone marrow CD11b(+)Gr-1(+) granulocyte precursors and mature neutrophils.

The protein localises to the cell membrane. Its function is as follows. May act as receptor. Negatively regulates TCR-mediated CD4(+) T cell proliferation and activation, possibly by binding an unknown ligand on the T cell surface. Enhances Toll-like receptor-mediated production of pro-inflammatory cytokines by macrophages and neutrophils. This Mus musculus (Mouse) protein is T-cell-interacting, activating receptor on myeloid cells protein 1 (Tarm1).